Here is a 278-residue protein sequence, read N- to C-terminus: MGLDLPNDNLIRGPLPEAHLDRLVDAVNARVDRGEPKVMLLTGASRGIGHATAKLFSEAGWRIISCARQPFDGERCPWEAGNDDHFQVDLGDHRMLPRAITEVKKRLAGAPLHALVNNAGVSPKTPTGDRMTSLTTSTDTWMRVFHLNLVAPILLAQGLFDELRAASGSIVNVTSIAGSRVHPFAGSAYATSKAALASLTRELAHDYAPHGIRVNAIAPGEIRTDMLSPDAEARVVASIPLRRVGTPDEVAKVIFFLCSDAASYVTGAEVPINGGQHL.

40–64 (LLTGASRGIGHATAKLFSEAGWRII) provides a ligand contact to NAD(+). A substrate-binding site is contributed by Ser-175. Tyr-189 functions as the Proton acceptor in the catalytic mechanism.

The protein belongs to the short-chain dehydrogenases/reductases (SDR) family.

The protein is Protein FixR (fixR) of Bradyrhizobium diazoefficiens (strain JCM 10833 / BCRC 13528 / IAM 13628 / NBRC 14792 / USDA 110).